A 260-amino-acid chain; its full sequence is Nuclear shuttle protein (260 aa).

Positions 1–29 are disordered; the sequence is MRRGAYTPRSTPFPRDRRSYNAGKGRSFR. The short motif at 21-42 is the Bipartite nuclear localization signal element; it reads NAGKGRSFRSYRRRGPVRPLAR. The Nuclear localization signal signature appears at 84 to 100; the sequence is VKTRALSDNRVGDYIKL. Positions 154–191 are interaction with Arabidopsis thaliana NSI protein; that stretch reads QLFGSINASYADLSIQDPYKDRFTVIRQVSYPVNTEKG.

Belongs to the begomovirus nuclear shuttle protein family. As to quaternary structure, binds to single-stranded and double-stranded viral DNA. Interacts with the host nuclear shuttle interacting (NSI) protein. This interaction may allow NSP to recruit NSI monomers to the viral genome and thus regulate nuclear export of viral genome by NSP.

The protein localises to the host nucleus. It localises to the host cytoplasm. The protein resides in the host cell membrane. In terms of biological role, binds to the genomic viral ssDNA, shuttles it into and out of the cell nucleus. Begomoviruses use 2 proteins to transport their DNA from cell to cell. The nuclear shuttle protein (NSP) shuttles it between nucleus and cytoplasm and the movement protein (MP) probably transports the DNA-NSP complex to the cell periphery and facilitates movement across the cell wall. This is Nuclear shuttle protein from Indian cassava mosaic virus (ICMV).